The chain runs to 363 residues: DNA repair protein rlp1 (363 aa).

The protein belongs to the RecA family. RAD51 subfamily. As to quaternary structure, interacts with rdl1 and sws1.

The protein resides in the cytoplasm. It is found in the nucleus. In terms of biological role, required for normal levels of meiotic recombination. Acts in the recombinational pathway of double-strand break (DSB) repair together with rhp51, rhp55 and rad22. Required for the full extent of DNA recombination and cell survival under condition of a replication fork collapse. The chain is DNA repair protein rlp1 from Schizosaccharomyces pombe (strain 972 / ATCC 24843) (Fission yeast).